The following is a 206-amino-acid chain: Small ribosomal subunit protein uS4 (206 aa).

The region spanning 96–157 (RRLDNVVYRM…KAKKQVRIQD (62 aa)) is the S4 RNA-binding domain.

Belongs to the universal ribosomal protein uS4 family. As to quaternary structure, part of the 30S ribosomal subunit. Contacts protein S5. The interaction surface between S4 and S5 is involved in control of translational fidelity.

In terms of biological role, one of the primary rRNA binding proteins, it binds directly to 16S rRNA where it nucleates assembly of the body of the 30S subunit. Functionally, with S5 and S12 plays an important role in translational accuracy. In Thioalkalivibrio sulfidiphilus (strain HL-EbGR7), this protein is Small ribosomal subunit protein uS4.